The following is a 217-amino-acid chain: Adenylate kinase (217 aa).

10–15 (GAGKGT) is an ATP binding site. The NMP stretch occupies residues 30–59 (STGDMFRAAMKNETELGLKAKSFIDAGDLV). Residues Thr31, Arg36, 57-59 (DLV), 85-88 (GFPR), and Gln92 each bind AMP. Residues 126–163 (GRRVSPTTGKTYHIVYNPPKVEGKCDIDGSDLIQRDDD) form an LID region. Residues Arg127 and 136-137 (TY) each bind ATP. AMP-binding residues include Arg160 and Arg171. An ATP-binding site is contributed by Gln199.

It belongs to the adenylate kinase family. Monomer.

It is found in the cytoplasm. It catalyses the reaction AMP + ATP = 2 ADP. Its pathway is purine metabolism; AMP biosynthesis via salvage pathway; AMP from ADP: step 1/1. Functionally, catalyzes the reversible transfer of the terminal phosphate group between ATP and AMP. Plays an important role in cellular energy homeostasis and in adenine nucleotide metabolism. This chain is Adenylate kinase, found in Shouchella clausii (strain KSM-K16) (Alkalihalobacillus clausii).